The sequence spans 246 residues: Probable transcriptional regulatory protein YebC (246 aa).

The interval methionine 1–lysine 20 is disordered.

Belongs to the TACO1 family.

Its subcellular location is the cytoplasm. In Shigella boydii serotype 4 (strain Sb227), this protein is Probable transcriptional regulatory protein YebC.